A 198-amino-acid chain; its full sequence is Type 1 fimbriae regulatory protein FimE (198 aa).

Residues 2 to 184 (SKRRYLTGKE…NAARFAGLWE (183 aa)) form the Tyr recombinase domain. Active-site residues include arginine 41, lysine 66, histidine 136, arginine 139, and histidine 162. Catalysis depends on tyrosine 171, which acts as the O-(3'-phospho-DNA)-tyrosine intermediate.

It belongs to the 'phage' integrase family.

Its function is as follows. FimE is one of the 2 regulatory proteins which control the phase variation of type 1 fimbriae in E.coli. These proteins mediate the periodic inversion of a 300bp DNA segment that harbors the promoter for the fimbrial structural gene, fimA. FimE switches fimA off. The polypeptide is Type 1 fimbriae regulatory protein FimE (fimE) (Escherichia coli O6:H1 (strain CFT073 / ATCC 700928 / UPEC)).